A 396-amino-acid chain; its full sequence is Obg-like ATPase 1 (396 aa).

In terms of domain architecture, OBG-type G spans L23 to L283. Residue N32–T37 participates in ATP binding. S36 and T56 together coordinate Mg(2+). L231 is an ATP binding site. The Nuclear export signal motif lies at L267–L274. K294 carries the N6-acetyllysine modification. One can recognise a TGS domain in the interval Q304–F387.

This sequence belongs to the TRAFAC class OBG-HflX-like GTPase superfamily. OBG GTPase family. YchF/OLA1 subfamily. In terms of assembly, monomer. Requires Mg(2+) as cofactor.

It localises to the cytoplasm. The protein resides in the nucleus. It is found in the nucleolus. In terms of biological role, hydrolyzes ATP, and can also hydrolyze GTP with lower efficiency. Has lower affinity for GTP. This Pongo abelii (Sumatran orangutan) protein is Obg-like ATPase 1.